We begin with the raw amino-acid sequence, 476 residues long: Doublesex and mab-3 related transcription factor 3 (476 aa).

The segment at residues 29–76 (CARCRNHGVLSWLKGHKRYCRFKDCTCEKCILIIERQRVMAAQVALRR) is a DNA-binding region (DM). Disordered regions lie at residues 89–130 (DSLR…RPAT) and 147–195 (GTLP…SKNC). Positions 102–121 (DAAATAATASQSSPASQASQ) are enriched in low complexity. A compositionally biased stretch (basic and acidic residues) spans 176–185 (FSDKDTDQRS). Positions 255–290 (RPPLEVLKKIFPNQKPTVLELILKGCGGDLVSAVEV) constitute a DMA domain. Polar residues predominate over residues 418–432 (NSTSVFRSSPVLSSR). The tract at residues 418–476 (NSTSVFRSSPVLSSRTTEDPRISIPDDGCPIVAKQSIYTEDDYDERSDSSDSRILNTSS) is disordered.

The protein belongs to the DMRT family.

It is found in the nucleus. Probable transcription factor that plays a role in configuring the spinal circuits controlling stride in vertebrates. Involved in neuronal specification within a specific subdivision of spinal cord neurons and in the development of a coordinated locomotor network controlling limb movements. May regulate transcription during sexual development. The sequence is that of Doublesex and mab-3 related transcription factor 3 (Dmrt3) from Rattus norvegicus (Rat).